Consider the following 549-residue polypeptide: Cation/acetate symporter ActP (549 aa).

13 helical membrane-spanning segments follow: residues W33 to A53, L77 to F97, G103 to E123, I148 to G168, I183 to A203, W206 to V226, I262 to L282, G303 to V323, L355 to L375, V404 to E424, I428 to L448, G464 to V484, and I493 to F513.

It belongs to the sodium:solute symporter (SSF) (TC 2.A.21) family.

Its subcellular location is the cell inner membrane. In terms of biological role, transports acetate. This chain is Cation/acetate symporter ActP, found in Salmonella arizonae (strain ATCC BAA-731 / CDC346-86 / RSK2980).